Reading from the N-terminus, the 528-residue chain is Abrin-a (528 aa).

A Pyrrolidone carboxylic acid modification is found at Gln-1. Residue Glu-164 is part of the active site. 3 disulfide bridges follow: Cys-247–Cys-269, Cys-286–Cys-305, and Cys-329–Cys-346. Positions 273 to 400 constitute a Ricin B-type lectin 1 domain; the sequence is YEPTVRIGGR…YLMRQGWRTG (128 aa). The stretch at 283–325 is one 1-alpha repeat; it reads DGMCVDVYDNGYHNGNRIIMWKCKDRLEENQLWTLKSDKTIRS. One copy of the 1-beta repeat lies at 326 to 366; sequence NGKCLTTYGYAPGSYVMIYDCTSAVAEATYWEIWDNGTIIN. Asn-361 and Asn-401 each carry an N-linked (GlcNAc...) asparagine glycan. A 1-gamma repeat occupies 369–401; it reads SALVLSAESSSMGGTLTVQTNEYLMRQGWRTGN. The region spanning 403–527 is the Ricin B-type lectin 2 domain; sequence TSPFVTSISG…GKPNQIWLTL (125 aa). The stretch at 414–449 is one 2-alpha repeat; the sequence is SDLCMQAQGSNVWMADCDSNKKEQQWALYTDGSIRS. Cystine bridges form between Cys-417–Cys-430 and Cys-456–Cys-473. A 2-beta repeat occupies 453–492; the sequence is TNNCLTSKDHKQGSTILLMGCSNGWASQRWVFKNDGSIYS. Residues 495–528 form a 2-gamma repeat; it reads DDMVMDVKGSDPSLKQIILWPYTGKPNQIWLTLF.

This sequence in the N-terminal section; belongs to the ribosome-inactivating protein family. Type 2 RIP subfamily. As to quaternary structure, disulfide-linked dimer of A and B chains.

It carries out the reaction Endohydrolysis of the N-glycosidic bond at one specific adenosine on the 28S rRNA.. The A chain is responsible for inhibiting protein synthesis through the catalytic inactivation of 60S ribosomal subunits by removing adenine from position 4,324 of 28S rRNA. Abrin-a is more toxic than ricin. In terms of biological role, the B chain is a galactose-specific lectin that facilitates the binding of abrin to the cell membrane that precedes endocytosis. The sequence is that of Abrin-a from Abrus precatorius (Indian licorice).